The following is a 120-amino-acid chain: UPF0102 protein Caur_2698 (120 aa).

The protein belongs to the UPF0102 family.

This is UPF0102 protein Caur_2698 from Chloroflexus aurantiacus (strain ATCC 29366 / DSM 635 / J-10-fl).